The primary structure comprises 159 residues: Small ribosomal subunit protein bS6 (159 aa).

The span at 93-151 shows a compositional bias: basic and acidic residues; it reads VDEHEEGPSAMMRKADRDRERDDRGPREGGFRGDREGRGDREGGGFRGDRGPRRPREDA. Positions 93 to 159 are disordered; sequence VDEHEEGPSA…DADTAAASEE (67 aa).

This sequence belongs to the bacterial ribosomal protein bS6 family.

Binds together with bS18 to 16S ribosomal RNA. In Rhodopseudomonas palustris (strain HaA2), this protein is Small ribosomal subunit protein bS6.